We begin with the raw amino-acid sequence, 166 residues long: Lymphocyte antigen 6G6e (166 aa).

The N-terminal stretch at 1 to 18 (MGPSSAFLGVLFLSGTLG) is a signal peptide. Positions 28-151 (LRCYTCSFAK…PPPNLPLMTL (124 aa)) constitute a UPAR/Ly6 domain. 4 disulfide bridges follow: C30/C52, C33/C39, C110/C129, and C130/C135.

In terms of assembly, interacts with CHRNA4. In terms of processing, O-glycosylated. Contains sialic acid residues.

The protein localises to the cell surface. The protein resides in the cell membrane. Its subcellular location is the cell projection. Believed to act as a modulator of nicotinic acetylcholine receptors (nAChRs) activity. In vitro potentiates alpha-3:beta-4-containing nAChRs maximum response by increasing peak current and slowing down receptor desensitization; the activity is dependent on its cell surface localization. This is Lymphocyte antigen 6G6e (Ly6g6e) from Mus musculus (Mouse).